Reading from the N-terminus, the 214-residue chain is Potassium-transporting ATPase KdpC subunit (214 aa).

A helical membrane pass occupies residues 17-37 (LWVITALIYPFSMIAIGQILF).

This sequence belongs to the KdpC family. The system is composed of three essential subunits: KdpA, KdpB and KdpC.

It localises to the cell inner membrane. Functionally, part of the high-affinity ATP-driven potassium transport (or Kdp) system, which catalyzes the hydrolysis of ATP coupled with the electrogenic transport of potassium into the cytoplasm. This subunit acts as a catalytic chaperone that increases the ATP-binding affinity of the ATP-hydrolyzing subunit KdpB by the formation of a transient KdpB/KdpC/ATP ternary complex. The protein is Potassium-transporting ATPase KdpC subunit of Microcystis aeruginosa (strain NIES-843 / IAM M-2473).